Consider the following 150-residue polypeptide: Large ribosomal subunit protein bL9 (150 aa).

Belongs to the bacterial ribosomal protein bL9 family.

In terms of biological role, binds to the 23S rRNA. This Streptococcus agalactiae serotype III (strain NEM316) protein is Large ribosomal subunit protein bL9.